The primary structure comprises 1149 residues: Beta-alanine-activating enzyme (1149 aa).

ATP contacts are provided by residues 178-186, D408, R422, and K543; that span reads TSGTTGLPK. Positions 570-646 constitute a Carrier domain; it reads ASVRLKLQNL…DLLSHIMTET (77 aa). S605 carries the O-(pantetheine 4'-phosphoryl)serine modification. Residues 653–683 are disordered; sequence PSKKRTADYSDSEASGKRQHKEMTTSSDTES.

This sequence belongs to the ATP-dependent AMP-binding enzyme family.

Its function is as follows. Covalently binds beta-alanine in an ATP-dependent manner to form a thioester bond with its phosphopantetheine group and transfers it to an, as yet, unknown acceptor. May be required for a post-translational protein modification or for post-transcriptional modification of an RNA. The chain is Beta-alanine-activating enzyme (aasdh) from Danio rerio (Zebrafish).